The following is a 417-amino-acid chain: mRNA export factor ICP27 homolog (417 aa).

Residues methionine 1 to aspartate 28 are compositionally biased toward acidic residues. Residues methionine 1–arginine 143 form a disordered region. Residues arginine 64 to arginine 120 are interaction with RNA. A Nuclear localization signal motif is present at residues arginine 88–arginine 94. Positions serine 96–serine 107 are enriched in low complexity. The interaction with host ALYREF or mouse ALYREF2 stretch occupies residues threonine 106–arginine 120. The span at tryptophan 108–alanine 117 shows a compositional bias: basic and acidic residues. Residues glutamine 118–lysine 127 carry the Nuclear localization signal motif. Over residues arginine 120–serine 130 the composition is skewed to basic residues. Residues proline 132–proline 141 are compositionally biased toward low complexity. Zn(2+)-binding residues include cysteine 295, histidine 385, cysteine 389, and cysteine 394. Residues cysteine 295–cysteine 394 form a CHC2-type zinc finger.

The protein belongs to the HHV-1 ICP27 protein family. As to quaternary structure, homodimer. Homodimerization is required for transactivation. Interacts with host ALYREF and with mouse ALYREF2. Associates in a complex with RNA, and host export factors NXF1/TAP and ALYREF or ALYREF2; these interactions allow nuclear export of viral transcripts.

The protein localises to the host cytoplasm. Its subcellular location is the host nucleus. Functionally, probably acts as a viral splicing factor that regulates viral RNA splicing. Functions as a multifunctional regulator of the expression of viral lytic genes. Early protein that promotes the accumulation and nuclear export of viral intronless RNA transcripts by interacting with mRNAs and cellular export proteins. The polypeptide is mRNA export factor ICP27 homolog (EJRF1) (Saimiriine herpesvirus 2 (strain 11) (SaHV-2)).